The primary structure comprises 276 residues: Shikimate dehydrogenase (NADP(+)) (276 aa).

Shikimate contacts are provided by residues 15 to 17 and Thr62; that span reads SKS. Lys66 serves as the catalytic Proton acceptor. Residues Asn87 and Asp103 each contribute to the shikimate site. Residues 127–131, 151–156, and Met215 contribute to the NADP(+) site; these read GAGGA and NRTLSK. Position 217 (Tyr217) interacts with shikimate. Gly239 is an NADP(+) binding site.

It belongs to the shikimate dehydrogenase family. Homodimer.

It carries out the reaction shikimate + NADP(+) = 3-dehydroshikimate + NADPH + H(+). It participates in metabolic intermediate biosynthesis; chorismate biosynthesis; chorismate from D-erythrose 4-phosphate and phosphoenolpyruvate: step 4/7. In terms of biological role, involved in the biosynthesis of the chorismate, which leads to the biosynthesis of aromatic amino acids. Catalyzes the reversible NADPH linked reduction of 3-dehydroshikimate (DHSA) to yield shikimate (SA). The chain is Shikimate dehydrogenase (NADP(+)) from Cellvibrio japonicus (strain Ueda107) (Pseudomonas fluorescens subsp. cellulosa).